A 144-amino-acid chain; its full sequence is UPF0735 ACT domain-containing protein LSEI_1046 (144 aa).

The ACT domain occupies 68–143 (VISLMLHHDR…GVSDVHLVSV (76 aa)).

This sequence belongs to the UPF0735 family.

The protein is UPF0735 ACT domain-containing protein LSEI_1046 of Lacticaseibacillus paracasei (strain ATCC 334 / BCRC 17002 / CCUG 31169 / CIP 107868 / KCTC 3260 / NRRL B-441) (Lactobacillus paracasei).